A 178-amino-acid polypeptide reads, in one-letter code: Large ribosomal subunit protein uL6 (178 aa).

This sequence belongs to the universal ribosomal protein uL6 family. In terms of assembly, part of the 50S ribosomal subunit.

This protein binds to the 23S rRNA, and is important in its secondary structure. It is located near the subunit interface in the base of the L7/L12 stalk, and near the tRNA binding site of the peptidyltransferase center. The protein is Large ribosomal subunit protein uL6 of Thermoplasma acidophilum (strain ATCC 25905 / DSM 1728 / JCM 9062 / NBRC 15155 / AMRC-C165).